Consider the following 265-residue polypeptide: Phosphonoacetaldehyde hydrolase (265 aa).

Asp-10 acts as the Nucleophile in catalysis. Residues Asp-10 and Ala-12 each coordinate Mg(2+). Lys-51 serves as the catalytic Schiff-base intermediate with substrate. Asp-184 contacts Mg(2+).

The protein belongs to the HAD-like hydrolase superfamily. PhnX family. In terms of assembly, homodimer. Mg(2+) is required as a cofactor.

It carries out the reaction phosphonoacetaldehyde + H2O = acetaldehyde + phosphate + H(+). Involved in phosphonate degradation. In Latilactobacillus sakei subsp. sakei (strain 23K) (Lactobacillus sakei subsp. sakei), this protein is Phosphonoacetaldehyde hydrolase.